The following is a 166-amino-acid chain: Interferon gamma (166 aa).

The signal sequence occupies residues 1 to 23 (MKYTSYILAFQLCIVLGSLGCYC). The residue at position 24 (glutamine 24) is a Pyrrolidone carboxylic acid. N-linked (GlcNAc...) asparagine glycans are attached at residues asparagine 48, asparagine 86, and asparagine 120.

The protein belongs to the type II (or gamma) interferon family. In terms of assembly, homodimer. Interacts with IFNGR1 (via extracellular domain); this interaction promotes IFNGR1 dimerization. Released primarily from activated T lymphocytes.

The protein resides in the secreted. Functionally, type II interferon produced by immune cells such as T-cells and NK cells that plays crucial roles in antimicrobial, antiviral, and antitumor responses by activating effector immune cells and enhancing antigen presentation. Primarily signals through the JAK-STAT pathway after interaction with its receptor IFNGR1 to affect gene regulation. Upon IFNG binding, IFNGR1 intracellular domain opens out to allow association of downstream signaling components JAK2, JAK1 and STAT1, leading to STAT1 activation, nuclear translocation and transcription of IFNG-regulated genes. Many of the induced genes are transcription factors such as IRF1 that are able to further drive regulation of a next wave of transcription. Plays a role in class I antigen presentation pathway by inducing a replacement of catalytic proteasome subunits with immunoproteasome subunits. In turn, increases the quantity, quality, and repertoire of peptides for class I MHC loading. Increases the efficiency of peptide generation also by inducing the expression of activator PA28 that associates with the proteasome and alters its proteolytic cleavage preference. Up-regulates as well MHC II complexes on the cell surface by promoting expression of several key molecules such as cathepsins B/CTSB, H/CTSH, and L/CTSL. Participates in the regulation of hematopoietic stem cells during development and under homeostatic conditions by affecting their development, quiescence, and differentiation. This Saimiri sciureus (Common squirrel monkey) protein is Interferon gamma (IFNG).